The chain runs to 320 residues: Ferrochelatase (320 aa).

2 residues coordinate Fe cation: H194 and E275.

Belongs to the ferrochelatase family.

It localises to the cytoplasm. The enzyme catalyses heme b + 2 H(+) = protoporphyrin IX + Fe(2+). It functions in the pathway porphyrin-containing compound metabolism; protoheme biosynthesis; protoheme from protoporphyrin-IX: step 1/1. Functionally, catalyzes the ferrous insertion into protoporphyrin IX. The polypeptide is Ferrochelatase (Stenotrophomonas maltophilia (strain R551-3)).